Reading from the N-terminus, the 351-residue chain is Signal recognition particle receptor FtsY (351 aa).

GTP contacts are provided by residues 152–159, 235–239, and 299–302; these read GVNGSGKT, DTAGR, and TKMD.

This sequence belongs to the GTP-binding SRP family. FtsY subfamily. In terms of assembly, part of the signal recognition particle protein translocation system, which is composed of SRP and FtsY.

The protein localises to the cell membrane. Its subcellular location is the cytoplasm. The enzyme catalyses GTP + H2O = GDP + phosphate + H(+). Involved in targeting and insertion of nascent membrane proteins into the cytoplasmic membrane. Acts as a receptor for the complex formed by the signal recognition particle (SRP) and the ribosome-nascent chain (RNC). The protein is Signal recognition particle receptor FtsY of Metamycoplasma hominis (strain ATCC 23114 / DSM 25592 / NBRC 14850 / NCTC 10111 / PG21) (Mycoplasma hominis).